The following is a 191-amino-acid chain: Rubrerythrin (191 aa).

The region spanning 1 to 146 (MKSLKGSRTE…DFARNIKEGR (146 aa)) is the Ferritin-like diiron domain. Glutamate 20, glutamate 53, glutamate 94, glutamate 97, glutamate 128, histidine 131, cysteine 158, cysteine 161, cysteine 174, and cysteine 177 together coordinate Fe(3+). The 39-residue stretch at 153 to 191 (ATKWRCRNCGYVHEGTGAPELCPACAHPKAHFELLGINW) folds into the Rubredoxin-like domain.

In terms of assembly, homodimer. Possesses two rubredoxin-like centers and two non-sulfur oxo-bridged di-iron centers per dimer. The cofactor is Fe(3+).

Its subcellular location is the cytoplasm. Functionally, may provide oxidative stress protection via catalytic reduction of intracellular hydrogen peroxide. The chain is Rubrerythrin (rbr) from Nitratidesulfovibrio vulgaris (strain ATCC 29579 / DSM 644 / CCUG 34227 / NCIMB 8303 / VKM B-1760 / Hildenborough) (Desulfovibrio vulgaris).